A 475-amino-acid polypeptide reads, in one-letter code: Rho GTPase-activating protein 15 (475 aa).

Residues 1-22 (MERSTTSDTASEKPNPSHSTGA) form a disordered region. Residues 80–190 (VVEKEGYLLK…WFHAIKNAID (111 aa)) form the PH domain. The Rho-GAP domain maps to 281–470 (SHLHLVCEHE…LMLSEYSKIF (190 aa)).

Its subcellular location is the cytoplasm. The protein localises to the membrane. GTPase activator for the Rho-type GTPases by converting them to an inactive GDP-bound state. The chain is Rho GTPase-activating protein 15 (ARHGAP15) from Gallus gallus (Chicken).